The chain runs to 498 residues: COP9 signalosome complex subunit 1 (498 aa).

Residues 249–430 form the PCI domain; that stretch reads SYLEAANSFI…HVLVSTQGDK (182 aa).

It belongs to the CSN1 family. In terms of assembly, component of the COP9 signalosome (CSN) complex.

The protein resides in the cytoplasm. The protein localises to the nucleus. Functionally, component of the COP9 signalosome (CSN) complex that acts as an regulator of the ubiquitin (Ubl) conjugation pathway by mediating the deneddylation of the cullin subunit of SCF-type E3 ubiquitin-protein ligase complexes. The CSN complex seems to link protein degradation to sexual development. Required for fruit body formation. The sequence is that of COP9 signalosome complex subunit 1 (csnA) from Emericella nidulans (strain FGSC A4 / ATCC 38163 / CBS 112.46 / NRRL 194 / M139) (Aspergillus nidulans).